The chain runs to 96 residues: UPF0235 protein Spro_4033 (96 aa).

The protein belongs to the UPF0235 family.

The chain is UPF0235 protein Spro_4033 from Serratia proteamaculans (strain 568).